The primary structure comprises 100 residues: Small ubiquitin-related modifier 1 (100 aa).

Residues glutamate 19–glycine 96 form the Ubiquitin-like domain. Residue glycine 96 forms a Glycyl lysine isopeptide (Gly-Lys) (interchain with K-? in acceptor proteins) linkage. Residues cysteine 97–aspartate 100 constitute a propeptide that is removed on maturation.

It belongs to the ubiquitin family. SUMO subfamily. In terms of assembly, interacts with sae2, ube2i, ranbp2, pias1 and pias2. Covalently attached to a number of proteins. In terms of processing, cleavage of precursor form by a sentrin-specific protease is necessary for function.

It localises to the nucleus membrane. It is found in the nucleus speckle. The protein resides in the cytoplasm. The protein localises to the nucleus. Its subcellular location is the PML body. It localises to the cell membrane. Ubiquitin-like protein that can be covalently attached to proteins as a monomer or a lysine-linked polymer. Covalent attachment via an isopeptide bond to its substrates requires prior activation by the E1 complex sae1-sae2 and linkage to the E2 enzyme ube2i. This post-translational modification on lysine residues of proteins plays a crucial role in a number of cellular processes such as nuclear transport, DNA replication and repair, mitosis and signal transduction. Polymeric sumo1 chains are also susceptible to polyubiquitination which functions as a signal for proteasomal degradation of modified proteins. This Danio rerio (Zebrafish) protein is Small ubiquitin-related modifier 1 (sumo1).